A 3071-amino-acid chain; its full sequence is MLEGLVAGLLNKILGSYVDNLDTKQLNIGVWGGHVSLHNLRIKPEALDKLGIPIEITSGLIGTFTLEIPWSNLRNKSLTINIEDIYLSIHPQAKNSLTRDELEQSQQALKQEQLDSFEILRKNFRETLEESSSNPNISRKQSFIEYLIAKLTDNIQIYIERIHLRFEDNLSDLEKPYSLGLTLYSLRVTSTDASFTEYLLSTDPIPSSCIHKIITVDYFSIYWISKCEISKCTTTEDIFSYLKNLIPSAEKSPAYNYILKPLRATAHVVLFRHPTDQIMQLRGKLSVEEISITLSDHMYYSLLGVIDYFRVVMKQQYYLQYRPKSTPKEKPLEWFKYAILVVKDSVHESRYHWTWKYFKRRRDDRIAYMHIIRKRYLNEQISKEEIDLQKKIEKRNSTYDLIKYRSRVHTSLIEERNSIYLKPKTSAAHGLYDWFSGYIRKPQSQDEDTLASTDKTAADLTDQEQKEFFSAIEWSGQLYPDTVNLDPDMCMANVEVSIAKGSFVIQSHINGRVIPLIKQRFESFATECFIRPQSLKLKVSLKDLDMFDGITNPELEPARVIFAKPSVEESESLQKIPEAYRTHLFFLLLDTKPVYKASSTLIVHLRTLVIIYNRVCIESLLAFFVPPRTKIEHVSEWGYSAAAKVMTLARQTRASLDYALEMHKTSDMTIDLQAPLIVVREECTDLKSPTLFLDVGRALVHTQLVDDAIIDKFRKLQSKKINNEQLKQLENLMYDKFTISLFNVRCLIGPDYETGWRCLPKGCDYHILKECSLDINFEISILQKATNLTKFKVSSHMKHAEIMFSDVQYKVFINMMSNILPTLPVAEIPFTYQQFLDAVKPPPFFDAPDNFQITHTSLGSHANENTAAQFMAQQIFAFYFKVDYAICSLYRRSENYLIPVVRAFTEFYIDLVVRKFDYLVTSKLNDLVIKEFTYPSSLCDNVLVRSSPSPKNNFDDTVFISYTSIDYDSPELDSVYEGVRTTIAVVLSDLILNVEPTGFSFVYDFIRATFTSLNDEYMIGEDPELTRKISPVEGIIPEDANVRFDNVDIFLYDCDQHFSTVCLYSANMHMEFREKFFLQARFYDLEVKNHMKSNNPPKTIVKIDDNDLFIFKYESYDIPKDISKPTCDCVYDISFGSLTFYFQKSYFNAIYDFLLKLKRFQELFSSIRYAIYYKLYGNKVSLTYPKFELRIKHPKVYFDDVLDEERNCRMQLIVKPQSFYAFSKCPIVEKNSKKSIFSCEITKVEFHTAVPSSSHHDVLMEENNVHLDLTYDANYTTGAYVFKATGDLDPVILNMCQSHHVIFWDLIDVATTFARVDSSFYTSENLRRELDKAFDRSGTAAKLKHPKKTVVETLDILTTFNLPEIRLNVHTDDFWIHGGDLTQLHSILSFFGFSLDYNFYSSGRCYAEFSIDSIQLKDCNPQDNVVFLDVLEYSENHNRLVNGCLEYDSQNPRYNLVLDIDSPKIFVNLNYLYSIWSIFVHWHRAYYSHLDYLTEVEYFIMGNPNQNACGEESYWYYRITFVDMTLLFFRNVSDANLYSLPMFFGELLITQQSIFAVTANNMKINACPLSETANISNQLADPFGFRYTYSQHTVNKIQIITNITLDFDSFVLRTTVNDFLFLQTILRKIYNFYYALYDVPTTDVELLKRTKDDQLATNPDFLQLSVDTGQPSSVFGIRICKEEFLLTVDGIRLLVISQLHDLPLLNINIKPFQVDLNDWSSELNSNAHLELFMNFYNFSNSHWEPFLEPWKVGVHISRNPNTSKTAVHVFSREKLDLVITPQLIETLHFGFTKVISTPFPIEFKCDAPYRIHNYTGHAVSVWADFENAADSCVRHLENNEETDWKFEEWRQMQDVVKQDQDRSYIGFHFENSKWESLRHVRVNRVGEHIYPLISYDQDELKHYMVVDVNLGEDYIKHITLRSPLLLINETQMEIDVVFCDSDGIQRSQIYHMSPEESCSLPIETAYYYSIHIRPVSEFKFNWTSEAISWKDLVDNKQSLVTCQHSDNTFSTPACRFAANAELKSQTISNHYPFMHITISALLEVKNLLPIDLNIRIIDKDQEGVWMSNVGIGECAYVHSINISHVLLLQAESSESHYLPSSLATIITNDSAQERDEYMTITLQGGRKTRLGLSYTEKYPGIYHIEIFSPYIIINKSGSFLFVGPKNDYNRISFSSASLSSGEDGKVVPCMFSYSHNYGSRRCRLRADNSNWSEPVSFDAIGSVFEVELPSKEDHNKVYRLGIFVETGPDGYSKTNIVTITSRFIVRNKTRWSLVIAEPYNDFIAEIAPEGEEFLTYLRKHSHPMLKLSSSDCYLWSSSFYIEEIGSTHVRLMTSEGEKLLRLEIVIKNATIFISIFEETGDWPYYIKNESGVLLKFWQVNPIDASEGKNNTALLKYHDIPPHSEVKYSWDYPCCANKEIALCYGDQKCLTTLAEIGPLSPFKFTDASNNTKFISRDIVANGLSKILILKDYDPSKAVRKPKIYSKVSTEERDFNLEQFDSGIDLSVKFLLEGIGISLVERNTQELAYLTFHGINLFFTDSHLIRTFKLDVRWIQIDNQLYGGIYPIILYPSILSQEDTMNDNSLLPTFHSMVAVVKNDTYGVTYVKYATILLQELTIEIDEDFAFAALEYIKDSVPRSKRNTGKMFDDSLELVPENLGNDLKVYFEVLNLQPTEMHLSFVRTERINNTDGTVVSSHNPFVFFVNVLSMAIGNINDAPVRLNALLMDNAHVSLRRLFELVKNHYSQELLSQVHKIVGSADFLGNPVGLFTTITSGFADIFYEPFHGFILNEGSYELGIGFAKGTASFIKKAVFGITDSISKVTGTISRSLSVITLDPKFQSRRRAARIRNRPVHILYGVTAGAASLYTGVRSGVRGLALQPIIGARRNGLPGLVKGLGKGLVGFTTKPLVGLFDFASSISEGARNTTTVFDERHIEKLRLSRLMSDDGVVYPFQLREALGQYWLKHLDNGRYFKDFYKAHIIIENKVLVILTNNRILFVQPQQLNCKKEIHLSKVKTVKLQSKEHIFLQLLKGVNFEFSVPENSVRTFFYRKIRDELAAYKHKVNYELEVAL.

A Chorein N-terminal domain is found at 2-115 (LEGLVAGLLN…QQALKQEQLD (114 aa)). Positions 2143–2415 (HIEIFSPYII…KYSWDYPCCA (273 aa)) constitute an SHR-BD domain.

It belongs to the VPS13 family.

Its subcellular location is the golgi apparatus. It localises to the trans-Golgi network. In terms of biological role, mediates the transfer of lipids between membranes at organelle contact sites. May play a role in mitochondrial lipid homeostasis, Golgi vesicle transport, reticulophagy, actin cytoskeleton organization and formation of the forespore membrane. In Schizosaccharomyces pombe (strain 972 / ATCC 24843) (Fission yeast), this protein is Intermembrane lipid transfer protein vps1301.